A 273-amino-acid chain; its full sequence is Large ribosomal subunit protein uL2 (273 aa).

The segment at Gly222–Lys273 is disordered. A compositionally biased stretch (basic and acidic residues) spans Asp229–Asn239.

It belongs to the universal ribosomal protein uL2 family. As to quaternary structure, part of the 50S ribosomal subunit. Forms a bridge to the 30S subunit in the 70S ribosome.

Its function is as follows. One of the primary rRNA binding proteins. Required for association of the 30S and 50S subunits to form the 70S ribosome, for tRNA binding and peptide bond formation. It has been suggested to have peptidyltransferase activity; this is somewhat controversial. Makes several contacts with the 16S rRNA in the 70S ribosome. The polypeptide is Large ribosomal subunit protein uL2 (Tolumonas auensis (strain DSM 9187 / NBRC 110442 / TA 4)).